Consider the following 314-residue polypeptide: DNA-directed RNA polymerase subunit alpha (314 aa).

An alpha N-terminal domain (alpha-NTD) region spans residues 1-228 (MIEIEKPRIE…EHLNIFVSLT (228 aa)). The tract at residues 245–314 (KEKVLEMSIE…DLGLGLRKED (70 aa)) is alpha C-terminal domain (alpha-CTD).

The protein belongs to the RNA polymerase alpha chain family. In terms of assembly, homodimer. The RNAP catalytic core consists of 2 alpha, 1 beta, 1 beta' and 1 omega subunit. When a sigma factor is associated with the core the holoenzyme is formed, which can initiate transcription.

The catalysed reaction is RNA(n) + a ribonucleoside 5'-triphosphate = RNA(n+1) + diphosphate. DNA-dependent RNA polymerase catalyzes the transcription of DNA into RNA using the four ribonucleoside triphosphates as substrates. This Staphylococcus epidermidis (strain ATCC 35984 / DSM 28319 / BCRC 17069 / CCUG 31568 / BM 3577 / RP62A) protein is DNA-directed RNA polymerase subunit alpha.